Reading from the N-terminus, the 100-residue chain is Large ribosomal subunit protein bL21 (100 aa).

The protein belongs to the bacterial ribosomal protein bL21 family. In terms of assembly, part of the 50S ribosomal subunit. Contacts proteins L15 and L20.

Binds directly to 23S rRNA, probably serving to organize its structure. This chain is Large ribosomal subunit protein bL21, found in Deinococcus radiodurans (strain ATCC 13939 / DSM 20539 / JCM 16871 / CCUG 27074 / LMG 4051 / NBRC 15346 / NCIMB 9279 / VKM B-1422 / R1).